The sequence spans 296 residues: Myeloid differentiation primary response protein MyD88 (296 aa).

One can recognise a Death domain in the interval 54–109; it reads MDFEYLEIRQLETQADPTGRLLDAWQGRPGASVGRLLELLTKLGRDDVLLELGPSI. The interval 110-155 is intermediate domain; sequence EEDCQKYILKQQQEEAEKPLQVAAVDSSVPRTAELAGITTLDDPLG. The TIR domain occupies 159–293; it reads ERFDAFICYC…WFWTRLAKAL (135 aa). S244 is subject to Phosphoserine.

As to quaternary structure, homodimer. Also forms heterodimers with TIRAP. Binds to TLR2, TLR5, IRAK1, IRAK2 and IRAK4 via their respective TIR domains. Interacts with IL18R1. Interacts with BMX, IL1RL1, IKBKE and IRF7. Interacts with LRRFIP1 and LRRFIP2; this interaction positively regulates Toll-like receptor (TLR) signaling in response to agonist. Interacts with FLII. LRRFIP1 and LRRFIP2 compete with FLII for MYD88-binding. Interacts with IRF1. Upon IL1B treatment, forms a complex with PELI1, IRAK1, IRAK4 and TRAF6; this complex recruits MAP3K7/TAK1, TAB1 and TAB2 to mediate NF-kappa-B activation. Direct binding of SMAD6 to PELI1 prevents the complex formation and hence negatively regulates IL1R-TLR signaling and eventually NF-kappa-B-mediated gene expression. May interact with PIK3AP1. Interacts (via TIR domain) with DHX9 (via H2A and OB-fold regions); this interaction is direct. Interacts with OTUD4 deubiquitinase; the interaction is direct. Interacts with TLR4. In terms of assembly, (Microbial infection) In case of infection, interacts with uropathogenic E.coli protein TcpC; suppressing Toll-like receptor (TLR)-mediated cytokine production. (Microbial infection) In case of infection, interacts with uropathogenic E.faecalis protein TcpF; suppressing Toll-like receptor (TLR)-mediated cytokine production. As to quaternary structure, (Microbial infection) In case of infection, interacts with B.melitensis protein TcpB. In terms of assembly, (Microbial infection) Interacts with human metapneumovirus protein M2-2; this interaction prevents MYD88-mediated cytokine secretion. In terms of processing, ubiquitinated; undergoes 'Lys-63'-linked polyubiquitination. OTUD4 specifically hydrolyzes 'Lys-63'-linked polyubiquitinated MYD88. Deubiquitinated by USP3 that cleaves 'Lys-63'-linked ubiquitin chains leading to inhibition of MYD88-induced NF-kappa-B signaling. (Microbial infection) Ubiquitinated by human herpesvirus 8 (KSHV) protein RTA/ORF50, leading to proteasomal degradation ans suppression of TLR4 signaling pathway. As to expression, ubiquitous.

It localises to the cytoplasm. It is found in the nucleus. Adapter protein involved in the Toll-like receptor and IL-1 receptor signaling pathway in the innate immune response. Acts via IRAK1, IRAK2, IRF7 and TRAF6, leading to NF-kappa-B activation, cytokine secretion and the inflammatory response. Increases IL-8 transcription. Involved in IL-18-mediated signaling pathway. Activates IRF1 resulting in its rapid migration into the nucleus to mediate an efficient induction of IFN-beta, NOS2/INOS, and IL12A genes. Upon TLR8 activation by GU-rich single-stranded RNA (GU-rich RNA) derived from viruses such as SARS-CoV-2, SARS-CoV and HIV-1, induces IL1B release through NLRP3 inflammasome activation. MyD88-mediated signaling in intestinal epithelial cells is crucial for maintenance of gut homeostasis and controls the expression of the antimicrobial lectin REG3G in the small intestine. This chain is Myeloid differentiation primary response protein MyD88, found in Homo sapiens (Human).